We begin with the raw amino-acid sequence, 125 residues long: MAVCIIDHDNIRGVIYFEPVHGKDKVLGSVIGLKSGTYSLIIHRYGDISRGCDSIGSPEIFIGNIFVNRYGVAYVYLDTDVNISTIIGKALSISKNDQRLACGVIGISYINEKIIHFLTINENGV.

Cys52 and Cys102 are oxidised to a cystine.

This sequence belongs to the Cu-Zn superoxide dismutase family.

The protein resides in the host cytoplasm. Its function is as follows. Virion protein with no enzymatic activity. The polypeptide is Cu-Zn superoxide dismutase-like protein (Bos taurus (Bovine)).